Reading from the N-terminus, the 46-residue chain is Mu-segestritoxin-Sf1d (46 aa).

Intrachain disulfides connect Cys-3-Cys-19, Cys-10-Cys-22, Cys-18-Cys-42, and Cys-24-Cys-40. Positions 31–33 are keys region for toxin activity; sequence RPW.

Belongs to the neurotoxin 16 (SFI) family. As to expression, expressed by the venom gland.

It is found in the secreted. In terms of biological role, insecticidal toxin. It inhibits insect voltage-gated sodium channels (Nav) by partially blocking the channel pore in DUM neurons from the American cockroach, not by acting as a gating modifier. The inhibition is only partially reversible after prolonged washout. In vivo, the toxin causes flaccid paralysis followed by death when injected into Heliothis virescens larvae. It also causes uncoordinated movements followed by full paralysis to sheep blowflies (Lucilia cuprina). When the toxin is fused to snowdrop lectin, it is orally active against larvae of the tomato moth (Laconobia oleracea), the rice brown planthopper (Nilaparvata lugens), and the peach-potato aphid (Myzus persicae). In Segestria florentina (Tube-web spider), this protein is Mu-segestritoxin-Sf1d.